We begin with the raw amino-acid sequence, 90 residues long: Hemoglobin subunit alpha-1 (90 aa).

In terms of domain architecture, Globin spans 1-90 (VLTDDDKNHV…SKLSDLHAEK (90 aa)).

The protein belongs to the globin family. As to quaternary structure, heterotetramer of two alpha chains and two beta chains. As to expression, red blood cells.

In terms of biological role, involved in oxygen transport from the lung to the various peripheral tissues. The sequence is that of Hemoglobin subunit alpha-1 from Saara hardwickii (Indian spiny-tailed lizard).